Reading from the N-terminus, the 181-residue chain is Oligoribonuclease (181 aa).

One can recognise an Exonuclease domain in the interval 8 to 171 (LIWIDMEMTG…ADIYDSIEEL (164 aa)). The active site involves Y129.

Belongs to the oligoribonuclease family.

It is found in the cytoplasm. Functionally, 3'-to-5' exoribonuclease specific for small oligoribonucleotides. The polypeptide is Oligoribonuclease (Nitrosomonas eutropha (strain DSM 101675 / C91 / Nm57)).